Here is a 308-residue protein sequence, read N- to C-terminus: ADP-L-glycero-D-manno-heptose-6-epimerase (308 aa).

NADP(+)-binding positions include 10 to 11 (FI), 31 to 32 (DN), Lys-38, Lys-53, 75 to 79 (EGACS), and Asn-92. The active-site Proton acceptor is Tyr-139. Lys-143 provides a ligand contact to NADP(+). Residue Asn-168 coordinates substrate. NADP(+) is bound by residues Val-169 and Lys-177. The Proton acceptor role is filled by Lys-177. Substrate is bound by residues Ser-179, His-186, 200–203 (FAGS), Arg-208, and Tyr-271.

Belongs to the NAD(P)-dependent epimerase/dehydratase family. HldD subfamily. Homopentamer. NADP(+) serves as cofactor.

It catalyses the reaction ADP-D-glycero-beta-D-manno-heptose = ADP-L-glycero-beta-D-manno-heptose. It participates in nucleotide-sugar biosynthesis; ADP-L-glycero-beta-D-manno-heptose biosynthesis; ADP-L-glycero-beta-D-manno-heptose from D-glycero-beta-D-manno-heptose 7-phosphate: step 4/4. Its function is as follows. Catalyzes the interconversion between ADP-D-glycero-beta-D-manno-heptose and ADP-L-glycero-beta-D-manno-heptose via an epimerization at carbon 6 of the heptose. The protein is ADP-L-glycero-D-manno-heptose-6-epimerase of Actinobacillus succinogenes (strain ATCC 55618 / DSM 22257 / CCUG 43843 / 130Z).